Here is a 137-residue protein sequence, read N- to C-terminus: Glutamate mutase sigma subunit (137 aa).

Positions 3 to 137 (KKTIVLGVIG…ADMKEVLGVE (135 aa)) constitute a B12-binding domain. Adenosylcob(III)alamin is bound by residues 13-17 (SDCHA), H16, 61-63 (SSL), and 93-97 (NIVVG).

The protein belongs to the methylaspartate mutase GlmS subunit family. As to quaternary structure, heterotetramer composed of 2 epsilon subunits (GlmE) and 2 sigma subunits (GlmS). GlmE exists as a homodimer and GlmS as a monomer. It depends on adenosylcob(III)alamin as a cofactor.

The enzyme catalyses (2S,3S)-3-methyl-L-aspartate = L-glutamate. It functions in the pathway amino-acid degradation; L-glutamate degradation via mesaconate pathway; acetate and pyruvate from L-glutamate: step 1/4. Catalyzes the carbon skeleton rearrangement of L-glutamate to L-threo-3-methylaspartate ((2S,3S)-3-methylaspartate). The chain is Glutamate mutase sigma subunit from Clostridium tetanomorphum.